Reading from the N-terminus, the 292-residue chain is MAAITASMVAELRAKTDAPMMECKKALTEAEGNMEKAEEILRVKLGNKAGKAAARITAEGVIASFIDGTIGALVELNCETDFVSRNDDFLGFANEIAKLIATQNPADVAALSALSIGDETVEAVRTRLIGKIGENMTIRRFQRFEGTKLASYLHGTRIGVMVAFDGDEVAAKDVAMHAAAMKPVALSSDEVPAELIAKERSIAEQKAAESGKPAEIVAKMVEGSVQKYLKEVSLLNQPFVKNDKQTVEQMLKAANTTVKGFTLFVVGEGIEKKQDDFAAEVAAQVAAAKQQA.

Residues 80-83 are involved in Mg(2+) ion dislocation from EF-Tu; it reads TDFV.

Belongs to the EF-Ts family.

It localises to the cytoplasm. In terms of biological role, associates with the EF-Tu.GDP complex and induces the exchange of GDP to GTP. It remains bound to the aminoacyl-tRNA.EF-Tu.GTP complex up to the GTP hydrolysis stage on the ribosome. The chain is Elongation factor Ts from Ralstonia nicotianae (strain ATCC BAA-1114 / GMI1000) (Ralstonia solanacearum).